The chain runs to 284 residues: MLSKQIPLGIYEKALPAGECWLERLRLAKTLGFDFVEMSVDETDARLARLDWSREQRLALVSAVAETGVRVPSMCLSAHRRFPLGSEDDAVRAQGLEIMRKAIQFAQDVGIRVIQLAGYDVYYQQANDETRCRFRDGLKESVDMASRAQVTLAMEIMDYPLMNSISKALGYAHYLNNPWFQLYPDIGNLSAWDNDVQMELQAGSGHIVAVHVKDTKPGVFKNVPFGEGVVDFERCFETLKQSGYCGPYLIEMWSETAENPAAEVAKARDWVKARMAKAGMVEAA.

It belongs to the L-ribulose-5-phosphate 3-epimerase family.

It catalyses the reaction L-ribulose 5-phosphate = L-xylulose 5-phosphate. The protein operates within cofactor degradation; L-ascorbate degradation; D-xylulose 5-phosphate from L-ascorbate: step 3/4. Its function is as follows. Catalyzes the isomerization of L-xylulose-5-phosphate to L-ribulose-5-phosphate. Is involved in the anaerobic L-ascorbate utilization. The protein is L-ribulose-5-phosphate 3-epimerase UlaE of Salmonella paratyphi A (strain AKU_12601).